We begin with the raw amino-acid sequence, 298 residues long: N-acetylmuramic acid 6-phosphate etherase (298 aa).

The SIS domain maps to 55-218 (AANRYKKGGR…STGVMIRQGK (164 aa)). E83 functions as the Proton donor in the catalytic mechanism. E114 is a catalytic residue.

Belongs to the GCKR-like family. MurNAc-6-P etherase subfamily. In terms of assembly, homodimer.

It carries out the reaction N-acetyl-D-muramate 6-phosphate + H2O = N-acetyl-D-glucosamine 6-phosphate + (R)-lactate. The protein operates within amino-sugar metabolism; N-acetylmuramate degradation. Specifically catalyzes the cleavage of the D-lactyl ether substituent of MurNAc 6-phosphate, producing GlcNAc 6-phosphate and D-lactate. The protein is N-acetylmuramic acid 6-phosphate etherase of Lactobacillus acidophilus (strain ATCC 700396 / NCK56 / N2 / NCFM).